The primary structure comprises 656 residues: Heparan-alpha-glucosaminide N-acetyltransferase (656 aa).

The interval methionine 1–glycine 31 is disordered. Over methionine 1–serine 185 the chain is Lumenal, vesicle. N-linked (GlcNAc...) asparagine glycans are attached at residues asparagine 137 and asparagine 157. A disulfide bridge links cysteine 146 with cysteine 455. Residues asparagine 186 to leucine 206 form a helical membrane-spanning segment. Residues arginine 207–arginine 268 lie on the Cytoplasmic side of the membrane. Residues serine 234 to threonine 253 form a disordered region. 2 positions are modified to phosphoserine: serine 238 and serine 240. Tyrosine 249 carries the phosphotyrosine modification. Residues glycine 269 to lysine 289 form a helical membrane-spanning segment. The active site involves histidine 290. The Lumenal, vesicle segment spans residues histidine 290–glycine 295. Residues leucine 296–leucine 316 form a helical membrane-spanning segment. Residues serine 317–arginine 338 lie on the Cytoplasmic side of the membrane. The helical transmembrane segment at serine 339–leucine 359 threads the bilayer. Topologically, residues serine 360–proline 367 are lumenal, vesicle. The chain crosses the membrane as a helical span at residues glycine 368–tryptophan 388. Over lysine 389 to glutamine 413 the chain is Cytoplasmic. A helical transmembrane segment spans residues tryptophan 414–proline 434. Residues glycine 435 to glycine 493 lie on the Lumenal, vesicle side of the membrane. The chain crosses the membrane as a helical span at residues valine 494–leucine 514. Over valine 515–lysine 522 the chain is Cytoplasmic. Residues alanine 523 to threonine 543 traverse the membrane as a helical segment. Residues lysine 544–asparagine 557 are Lumenal, vesicle-facing. The chain crosses the membrane as a helical span at residues leucine 558–leucine 578. Over tyrosine 579–lysine 585 the chain is Cytoplasmic. A helical transmembrane segment spans residues glycine 586–glycine 606. At histidine 607–lysine 627 the chain is on the lumenal, vesicle side. Residues glutamate 628–tyrosine 648 traverse the membrane as a helical segment. The tract at residues valine 641–isoleucine 656 is lysosomal targeting region. The Cytoplasmic portion of the chain corresponds to lysine 649 to isoleucine 656.

As to quaternary structure, homooligomer. Homooligomerization is necessary for enzyme activity. Undergoes intralysosomal proteolytic cleavage; occurs within the end of the first and/or the beginning of the second luminal domain and is essential for the activation of the enzyme. In terms of processing, glycosylated. As to expression, expressed in the retina.

It is found in the lysosome membrane. The enzyme catalyses alpha-D-glucosaminyl-[heparan sulfate](n) + acetyl-CoA = N-acetyl-alpha-D-glucosaminyl-[heparan sulfate](n) + CoA + H(+). Lysosomal acetyltransferase that acetylates the non-reducing terminal alpha-glucosamine residue of intralysosomal heparin or heparan sulfate, converting it into a substrate for luminal alpha-N-acetyl glucosaminidase. This is Heparan-alpha-glucosaminide N-acetyltransferase (Hgsnat) from Mus musculus (Mouse).